A 118-amino-acid chain; its full sequence is UPF0102 protein Cphy_2398 (118 aa).

It belongs to the UPF0102 family.

The protein is UPF0102 protein Cphy_2398 of Lachnoclostridium phytofermentans (strain ATCC 700394 / DSM 18823 / ISDg) (Clostridium phytofermentans).